A 369-amino-acid polypeptide reads, in one-letter code: Anhydro-N-acetylmuramic acid kinase (369 aa).

Residue 12–19 (GTSLDGVD) coordinates ATP.

This sequence belongs to the anhydro-N-acetylmuramic acid kinase family.

It carries out the reaction 1,6-anhydro-N-acetyl-beta-muramate + ATP + H2O = N-acetyl-D-muramate 6-phosphate + ADP + H(+). It functions in the pathway amino-sugar metabolism; 1,6-anhydro-N-acetylmuramate degradation. The protein operates within cell wall biogenesis; peptidoglycan recycling. In terms of biological role, catalyzes the specific phosphorylation of 1,6-anhydro-N-acetylmuramic acid (anhMurNAc) with the simultaneous cleavage of the 1,6-anhydro ring, generating MurNAc-6-P. Is required for the utilization of anhMurNAc either imported from the medium or derived from its own cell wall murein, and thus plays a role in cell wall recycling. The chain is Anhydro-N-acetylmuramic acid kinase from Actinobacillus pleuropneumoniae serotype 3 (strain JL03).